A 500-amino-acid polypeptide reads, in one-letter code: NAD(P)H-quinone oxidoreductase chain 4, chloroplastic (500 aa).

14 helical membrane-spanning segments follow: residues 4–24 (FPWLTIIVFLPISAGSLLFFL), 31–51 (LIKWYTICICILELLLTTYAF), 87–107 (IGPILLTGFITTLATLAAWPV), 113–130 (LFHFLMLAMYSGQIGSFS), 134–154 (LLLFFIMWEFELIPVYLLLSM), 167–187 (FILYTAGGSVFLLIGVLGLGL), 208–228 (ALEIIFYIGFLIAFAVKSPII), 242–262 (HYSTCMLLAGILLKMGAYGLV), 272–292 (AHSIFSPWLIIVGTMQIIYAA), 305–325 (IAYSSVSHMGFIIIGIGSITD), 330–350 (GAILQIISHGFIGAALFFLAG), 386–406 (LALPGMSGFVAELIVFFGIIT), 416–436 (ILITFVMAIGMILTPIYSLSM), and 462–482 (LFVSISIFLPVIGIGIYPDFV).

The protein belongs to the complex I subunit 4 family.

The protein localises to the plastid. It is found in the chloroplast thylakoid membrane. The enzyme catalyses a plastoquinone + NADH + (n+1) H(+)(in) = a plastoquinol + NAD(+) + n H(+)(out). It carries out the reaction a plastoquinone + NADPH + (n+1) H(+)(in) = a plastoquinol + NADP(+) + n H(+)(out). The protein is NAD(P)H-quinone oxidoreductase chain 4, chloroplastic of Gossypium barbadense (Sea Island cotton).